The following is a 142-amino-acid chain: VapC ribonuclease R02377 (142 aa).

One can recognise a PINc domain in the interval 3-140 (FVDGSVIVAI…YKGNDFSQTD (138 aa)). Positions 5 and 115 each coordinate Mg(2+).

Belongs to the PINc/VapC protein family. It depends on Mg(2+) as a cofactor.

Its function is as follows. Toxic component of a type II toxin-antitoxin (TA) system. An RNase. This is VapC ribonuclease R02377 from Rhizobium meliloti (strain 1021) (Ensifer meliloti).